We begin with the raw amino-acid sequence, 238 residues long: Probable rhamnogalacturonate lyase B (238 aa).

The N-terminal stretch at 1 to 19 is a signal peptide; it reads MRLRTSLGVASACASVASA. Asn-27, Asn-110, and Asn-143 each carry an N-linked (GlcNAc...) asparagine glycan.

The protein belongs to the polysaccharide lyase 4 family.

The protein resides in the secreted. It carries out the reaction Endotype eliminative cleavage of L-alpha-rhamnopyranosyl-(1-&gt;4)-alpha-D-galactopyranosyluronic acid bonds of rhamnogalacturonan I domains in ramified hairy regions of pectin leaving L-rhamnopyranose at the reducing end and 4-deoxy-4,5-unsaturated D-galactopyranosyluronic acid at the non-reducing end.. Its function is as follows. Pectinolytic enzymes consist of four classes of enzymes: pectin lyase, polygalacturonase, pectin methylesterase and rhamnogalacturonase. Degrades the rhamnogalacturonan I (RG-I) backbone of pectin. The chain is Probable rhamnogalacturonate lyase B (rglB) from Aspergillus oryzae (strain ATCC 42149 / RIB 40) (Yellow koji mold).